The following is a 281-amino-acid chain: Probable feruloyl esterase A (281 aa).

Residues 1–21 form the signal peptide; it reads MKNFVSMHAILLACSAGAGLA. 3 cysteine pairs are disulfide-bonded: cysteine 50-cysteine 279, cysteine 112-cysteine 115, and cysteine 248-cysteine 255. Residue aspartate 98 participates in substrate binding. Asparagine 100 is a glycosylation site (N-linked (GlcNAc...) asparagine). Tyrosine 101 lines the substrate pocket. The active-site Nucleophile is the serine 154. A glycan (N-linked (GlcNAc...) asparagine) is linked at asparagine 173. Aspartate 215 (charge relay system) is an active-site residue. Histidine 268 is a substrate binding site. Catalysis depends on histidine 268, which acts as the Charge relay system.

This sequence belongs to the AB hydrolase superfamily. FaeA family.

The protein localises to the secreted. The enzyme catalyses feruloyl-polysaccharide + H2O = ferulate + polysaccharide.. In terms of biological role, involved in degradation of plant cell walls. Hydrolyzes the feruloyl-arabinose ester bond in arabinoxylans, and the feruloyl-galactose ester bond in pectin. The chain is Probable feruloyl esterase A (faeA) from Aspergillus flavus (strain ATCC 200026 / FGSC A1120 / IAM 13836 / NRRL 3357 / JCM 12722 / SRRC 167).